A 333-amino-acid chain; its full sequence is Foldase protein PrsA (333 aa).

The first 19 residues, 1–19 (MKKRHLLIAGLACMTILGA), serve as a signal peptide directing secretion. Cysteine 20 carries N-palmitoyl cysteine lipidation. Cysteine 20 carries S-diacylglycerol cysteine lipidation. Residues 155-245 (LIEVEASHIL…YGYHIILVTD (91 aa)) form the PpiC domain. The segment at 291-333 (GLFDLPDAPPVEDTPEIDGEDASDEAEDQAEDADENAEEEDES) is disordered. The segment covering 303-333 (DTPEIDGEDASDEAEDQAEDADENAEEEDES) has biased composition (acidic residues).

Belongs to the PrsA family.

Its subcellular location is the cell membrane. It carries out the reaction [protein]-peptidylproline (omega=180) = [protein]-peptidylproline (omega=0). In terms of biological role, plays a major role in protein secretion by helping the post-translocational extracellular folding of several secreted proteins. The sequence is that of Foldase protein PrsA from Halalkalibacterium halodurans (strain ATCC BAA-125 / DSM 18197 / FERM 7344 / JCM 9153 / C-125) (Bacillus halodurans).